Consider the following 394-residue polypeptide: MFKKFLWRDCVFIIVLITAIALPAYIHTNYPQAFSRFFYPVEAWFTKRDLRCSKNAPHFLRQLLIEMIDEQKSLNNQVAFWHNGQLFHCESGWEDGFRGEKPMRVNSRFRYASVTKVLTSALVLHAINEQKLSLDSKIIELLELPAPKDPRVAAITIKMLLEHSAGFDRLKTYMPMLTMDVKPWCPTNLAQLSKTKLDFDPETQFQYSNVGYCLLGAAIEKAYGRTFQSVAEDYFQLKKYGIAFVGDRFLPDEIQYDYRFESFYSEFYLKHFDFKDSLYAVGGLSGSAADIVQLLAALPKEAPLTIFSHNHTPCSINMLDACYGYALQPYQASGQSYTLWGKSGFFPGVNTDVFLDEQGNILATLRAASAKKTADTLLLRQYAYSLMNEYVNQK.

The polypeptide is Putative fimbrial assembly protein FimD, serogroup D (fimD) (Dichelobacter nodosus (Bacteroides nodosus)).